The sequence spans 299 residues: Trans-aconitate 3-methyltransferase (299 aa).

An N-acetylserine modification is found at S2.

This sequence belongs to the methyltransferase superfamily. Tam family.

The protein localises to the cytoplasm. It carries out the reaction trans-aconitate + S-adenosyl-L-methionine = (E)-2-(methoxycarbonylmethyl)but-2-enedioate + S-adenosyl-L-homocysteine. Its function is as follows. Catalyzes the S-adenosylmethionine monomethyl esterification of trans-aconitate and 3-isopropylmalate at high affinity and of other molecules like cis-aconitate, isocitrate, and citrate at lower velocities and affinities. The function of trans-aconitate methylation appears to be in reducing the toxicity of this spontaneous breakdown product of cis-aconitate. The role of 3-isopropylmalate methylation is unclear but may represent a metabolic branch at 3-isopropylmalate, where some of the material is taken in the pathway leading to leucine and some is taken in a pathway to the 3-isopropylmalate methyl ester, a molecule that provides a signal to switch from vegetative to invasive growth in response to amino acid starvation. The polypeptide is Trans-aconitate 3-methyltransferase (TMT1) (Saccharomyces cerevisiae (strain ATCC 204508 / S288c) (Baker's yeast)).